The primary structure comprises 772 residues: Endoplasmic reticulum membrane sensor NFE2L1 (772 aa).

The helical; Signal-anchor for type II membrane protein transmembrane segment at 7-24 (YLTEGLLQFTILLSLIGV) threads the bilayer. A disordered region spans residues 108-148 (DPEGSVSGSQPNSGLALESSSGLQDVTGPDNGVRESETEQG). The segment covering 113-131 (VSGSQPNSGLALESSSGLQ) has biased composition (polar residues). The interval 191–199 (VFDYSHRQK) is cholesterol recognition/amino acid consensus (CRAC) region. 2 N-linked (GlcNAc...) asparagine glycosylation sites follow: N348 and N360. The tract at residues 379-383 (SPEVE) is CPD. N412 and N423 each carry an N-linked (GlcNAc...) asparagine glycan. Disordered regions lie at residues 470–532 (EEEF…DSET) and 582–613 (SALD…QMSR). The short motif at 476-480 (DSGLS) is the Destruction motif element. Over residues 476 to 523 (DSGLSLDSSHSPSSLSSSEGSSSSSSSSSSSSSSASSSASSSFSEEGA) the composition is skewed to low complexity. S528 is modified (phosphoserine; by CK2). Basic and acidic residues predominate over residues 598–613 (GSKEKQADFLDKQMSR). At S599 the chain carries Phosphoserine; by PKA. The 64-residue stretch at 654–717 (LIRDIRRRGK…RQMKQKVQSL (64 aa)) folds into the bZIP domain. The tract at residues 656–675 (RDIRRRGKNKMAAQNCRKRK) is basic motif. Residues 682–696 (LERDVEDLQRDKARL) are leucine-zipper.

It belongs to the bZIP family. CNC subfamily. In terms of assembly, interacts with KEAP1. As to quaternary structure, interacts (via CPD region) with FBXW7; leading to its ubiquitination and degradation. Interacts with SYVN1/HRD1; leading to its ubiquitination and degradation. Interacts (when ubiquitinated) with DDI2; leading to its cleavage. Interacts (via the bZIP domain) with small MAF protein (MAFF, MAFG or MAFK); required for binding to antioxidant response elements (AREs) on DNA. Interacts (via Destruction motif) with BTRC; leading to its ubiquitination and degradation. Interacts with CEBPB; the heterodimer represses expression of DSPP during odontoblast differentiation. Interacts with MOTS-c, a peptide produced by the mitochondrially encoded 12S rRNA MT-RNR1. Cleaved at Leu-104 by the aspartyl protease DDI2 following retrotranslocation, releasing the protein from the endoplasmic reticulum membrane and forming the transcription factor NRF1 that translocates into the nucleus. Ubiquitination is prerequisite for cleavage by aspartyl protease DDI2. In terms of processing, N-glycosylated in normal conditions, when it has a single-pass type II membrane protein topology, with the DNA-binding domain facing the endoplasmic reticulum lumen. Deglycosylated during retrotranslocation to the cytosolic side of the membrane, to have a single-pass type III membrane protein topology with the major part of the protein facing the cytosol. Post-translationally, ubiquitinated by the SCF(FBXW7) complex and SYVN1/HRD1, leading to its degradation by the proteasome. Ubiquitinated during retrotranslocation to the cytosolic side of the membrane: ubiquitination does not lead to degradation and is required for processing by the aspartyl protease DDI2 and subsequent release from the endoplasmic reticulum membrane. Phosphorylation by CK2 at Ser-528 inhibits transcription factor activity, possibly by affecting DNA-binding activity. Phosphorylation at Ser-599 is required for interaction with CEBPB. In terms of processing, ubiquitinated by the SCF(BTRC) complex in the nucleus, leading to its degradation by the proteasome.

It localises to the endoplasmic reticulum membrane. Its subcellular location is the nucleus. Functionally, endoplasmic reticulum membrane sensor that translocates into the nucleus in response to various stresses to act as a transcription factor. Constitutes a precursor of the transcription factor NRF1. Able to detect various cellular stresses, such as cholesterol excess, oxidative stress or proteasome inhibition. In response to stress, it is released from the endoplasmic reticulum membrane following cleavage by the protease DDI2 and translocates into the nucleus to form the transcription factor NRF1. Acts as a key sensor of cholesterol excess: in excess cholesterol conditions, the endoplasmic reticulum membrane form of the protein directly binds cholesterol via its CRAC motif, preventing cleavage and release of the transcription factor NRF1, thereby allowing expression of genes promoting cholesterol removal, such as CD36. Involved in proteasome homeostasis: in response to proteasome inhibition, it is released from the endoplasmic reticulum membrane, translocates to the nucleus and activates expression of genes encoding proteasome subunits. Its function is as follows. CNC-type bZIP family transcription factor that translocates to the nucleus and regulates expression of target genes in response to various stresses. Heterodimerizes with small-Maf proteins (MAFF, MAFG or MAFK) and binds DNA motifs including the antioxidant response elements (AREs), which regulate expression of genes involved in oxidative stress response. Activates or represses expression of target genes, depending on the context. Plays a key role in cholesterol homeostasis by acting as a sensor of cholesterol excess: in low cholesterol conditions, translocates into the nucleus and represses expression of genes involved in defense against cholesterol excess, such as CD36. In excess cholesterol conditions, the endoplasmic reticulum membrane form of the protein directly binds cholesterol via its CRAC motif, preventing cleavage and release of the transcription factor NRF1, thereby allowing expression of genes promoting cholesterol removal. Critical for redox balance in response to oxidative stress: acts by binding the AREs motifs on promoters and mediating activation of oxidative stress response genes, such as GCLC, GCLM, GSS, MT1 and MT2. Plays an essential role during fetal liver hematopoiesis: probably has a protective function against oxidative stress and is involved in lipid homeostasis in the liver. Involved in proteasome homeostasis: in response to proteasome inhibition, mediates the 'bounce-back' of proteasome subunits by translocating into the nucleus and activating expression of genes encoding proteasome subunits. Also involved in regulating glucose flux. Together with CEBPB; represses expression of DSPP during odontoblast differentiation. In response to ascorbic acid induction, activates expression of SP7/Osterix in osteoblasts. This Homo sapiens (Human) protein is Endoplasmic reticulum membrane sensor NFE2L1 (NFE2L1).